The sequence spans 130 residues: Histone H2A type 3 (130 aa).

Residues Met1 to Ala22 are disordered. Residue Ser2 is modified to N-acetylserine. A Phosphoserine; by RPS6KA5 modification is found at Ser2. Arg4 bears the Citrulline; alternate mark. Symmetric dimethylarginine; by PRMT5; alternate is present on Arg4. Residue Lys6 is modified to N6-(2-hydroxyisobutyryl)lysine. The span at Gln7–Ser19 shows a compositional bias: basic residues. Lys10 bears the N6-(2-hydroxyisobutyryl)lysine; alternate mark. N6-(beta-hydroxybutyryl)lysine; alternate is present on residues Lys10 and Lys14. An N6-lactoyllysine; alternate modification is found at Lys10. The residue at position 10 (Lys10) is an N6-succinyllysine; alternate. A Glycyl lysine isopeptide (Lys-Gly) (interchain with G-Cter in ubiquitin); alternate cross-link involves residue Lys14. Residue Lys16 forms a Glycyl lysine isopeptide (Lys-Gly) (interchain with G-Cter in ubiquitin) linkage. Residue Lys37 is modified to N6-(2-hydroxyisobutyryl)lysine; alternate. At Lys37 the chain carries N6-(beta-hydroxybutyryl)lysine; alternate. Lys37 bears the N6-crotonyllysine; alternate mark. 2 positions are modified to N6-(2-hydroxyisobutyryl)lysine: Lys75 and Lys76. N6-(2-hydroxyisobutyryl)lysine; alternate is present on Lys96. Lys96 carries the N6-(beta-hydroxybutyryl)lysine; alternate modification. Residue Lys96 is modified to N6-succinyllysine; alternate. Lys96 carries the N6-glutaryllysine; alternate modification. Gln105 carries the post-translational modification N5-methylglutamine. Position 119 is an N6-(2-hydroxyisobutyryl)lysine; alternate (Lys119). Lys119 is modified (N6-(beta-hydroxybutyryl)lysine; alternate). An N6-crotonyllysine; alternate mark is found at Lys119 and Lys120. 2 positions are modified to N6-glutaryllysine; alternate: Lys119 and Lys120. Residue Lys120 forms a Glycyl lysine isopeptide (Lys-Gly) (interchain with G-Cter in ubiquitin); alternate linkage. Position 121 is a phosphothreonine; by DCAF1 (Thr121). Lys126 is modified (N6-crotonyllysine; alternate). An N6-glutaryllysine; alternate modification is found at Lys126.

It belongs to the histone H2A family. As to quaternary structure, the nucleosome is a histone octamer containing two molecules each of H2A, H2B, H3 and H4 assembled in one H3-H4 heterotetramer and two H2A-H2B heterodimers. The octamer wraps approximately 147 bp of DNA. Deiminated on Arg-4 in granulocytes upon calcium entry. Post-translationally, monoubiquitination of Lys-120 (H2AK119Ub) by RING1, TRIM37 and RNF2/RING2 complex gives a specific tag for epigenetic transcriptional repression and participates in X chromosome inactivation of female mammals. It is involved in the initiation of both imprinted and random X inactivation. Ubiquitinated H2A is enriched in inactive X chromosome chromatin. Ubiquitination of H2A functions downstream of methylation of 'Lys-27' of histone H3 (H3K27me). H2AK119Ub by RNF2/RING2 can also be induced by ultraviolet and may be involved in DNA repair. Monoubiquitination of Lys-120 (H2AK119Ub) by TRIM37 may promote transformation of cells in a number of breast cancers. Following DNA double-strand breaks (DSBs), it is ubiquitinated through 'Lys-63' linkage of ubiquitin moieties by the E2 ligase UBE2N and the E3 ligases RNF8 and RNF168, leading to the recruitment of repair proteins to sites of DNA damage. Ubiquitination at Lys-14 and Lys-16 (H2AK13Ub and H2AK15Ub, respectively) in response to DNA damage is initiated by RNF168 that mediates monoubiquitination at these 2 sites, and 'Lys-63'-linked ubiquitin are then conjugated to monoubiquitin; RNF8 is able to extend 'Lys-63'-linked ubiquitin chains in vitro. Deubiquitinated by USP51 at Lys-14 and Lys-16 (H2AK13Ub and H2AK15Ub, respectively) after damaged DNA is repaired. H2AK119Ub and ionizing radiation-induced 'Lys-63'-linked ubiquitination (H2AK13Ub and H2AK15Ub) are distinct events. In terms of processing, phosphorylation on Ser-2 (H2AS1ph) is enhanced during mitosis. Phosphorylation on Ser-2 by RPS6KA5/MSK1 directly represses transcription. Acetylation of H3 inhibits Ser-2 phosphorylation by RPS6KA5/MSK1. Phosphorylation at Thr-121 (H2AT120ph) by DCAF1 is present in the regulatory region of many tumor suppresor genes and down-regulates their transcription. Glutamine methylation at Gln-105 (H2AQ104me) by FBL is specifically dedicated to polymerase I. It is present at 35S ribosomal DNA locus and impairs binding of the FACT complex. Post-translationally, symmetric dimethylation on Arg-4 by the PRDM1/PRMT5 complex may play a crucial role in the germ-cell lineage. In terms of processing, crotonylation (Kcr) is specifically present in male germ cells and marks testis-specific genes in post-meiotic cells, including X-linked genes that escape sex chromosome inactivation in haploid cells. Crotonylation marks active promoters and enhancers and confers resistance to transcriptional repressors. It is also associated with post-meiotically activated genes on autosomes. Lactylated in macrophages by EP300/P300 by using lactoyl-CoA directly derived from endogenous or exogenous lactate, leading to stimulates gene transcription.

The protein localises to the nucleus. It is found in the chromosome. Core component of nucleosome. Nucleosomes wrap and compact DNA into chromatin, limiting DNA accessibility to the cellular machineries which require DNA as a template. Histones thereby play a central role in transcription regulation, DNA repair, DNA replication and chromosomal stability. DNA accessibility is regulated via a complex set of post-translational modifications of histones, also called histone code, and nucleosome remodeling. The chain is Histone H2A type 3 from Homo sapiens (Human).